A 220-amino-acid chain; its full sequence is Large ribosomal subunit protein bL9 (220 aa).

A compositionally biased stretch (low complexity) spans 167–184 (AAAEVEQAEDVAAAEQQD). A disordered region spans residues 167–220 (AAAEVEQAEDVAAAEQQDSSPVDDHADDADGVADGEGRDEGAGDASDEEEMPST). Over residues 211–220 (ASDEEEMPST) the composition is skewed to acidic residues.

The protein belongs to the bacterial ribosomal protein bL9 family.

Its function is as follows. Binds to the 23S rRNA. The sequence is that of Large ribosomal subunit protein bL9 from Anaplasma marginale (strain Florida).